Reading from the N-terminus, the 507-residue chain is MFEVPITLTNRKFAQRRKLKYQYINYISRRFDRISKKSTTTDSLPTPENSAAENNDEEEGQNSEAGTYRRSVLQQKKRRRERHWRSVVGEIYSTTESETDSQEEETEEGGEHDTGIDKEDSDEERKFWKKYEKPEKSFEIWRTVSSQNKQPINKQKMTYHNFKKIEKIPLRKMEIPLLHCTKENKLYFQSISRGLEPLKTSTSEVRNYRTRHIVTLTDLLHLNVSRHNWSLAYKIFATLIRIPGVQIKSLWGIGVEILDNLSNSSSGLDFLQWMCQIYSSKSRFVQNINYRSIVPPFQTGSRTHTAKFAITYLWSSLINCQKSMEPSSNIIDKPFDTENDLLQELIDKISEWVLTPPFMEDAEVWFIYASCHLLKADTLSRQFVNDNKNNDLIGLDRDIKINQVIKHIHYVRTFLKICLDKGGFAVPSRLIENQLKSFESRLYGEAQDIQERDVANVYDSIDNSSVENSFGDVYETNAEFLDTQLMDLSPEDNGLDEMHYSDEDSSE.

The segment covering 37–47 has biased composition (polar residues); the sequence is KSTTTDSLPTP. Disordered stretches follow at residues 37-76 and 89-124; these read KSTTTDSLPTPENSAAENNDEEEGQNSEAGTYRRSVLQQK and GEIYSTTESETDSQEEETEEGGEHDTGIDKEDSDEE. Acidic residues predominate over residues 97–108; it reads SETDSQEEETEE. Basic and acidic residues predominate over residues 109-124; it reads GGEHDTGIDKEDSDEE.

In terms of assembly, component of the core factor (CF) complex, which consists of RRN6, RRN7 and RRN11. The CF heterotrimer may further dimerize to form a hexamer. RRN11 interacts with RRN6, RRN7 and SPT15.

It localises to the nucleus. It is found in the nucleolus. Acts as a component of the core factor (CF) complex which is essential for the initiation of rDNA transcription by RNA polymerase I. After binding of UAF (upstream activation factor) to an upstream element of the promoter, CF is recruited in a SPT15/TBP-dependent manner to form a preinitiation complex. The chain is RNA polymerase I-specific transcription initiation factor RRN11 (RRN11) from Saccharomyces cerevisiae (strain ATCC 204508 / S288c) (Baker's yeast).